The sequence spans 596 residues: Nodulation outer protein X (596 aa).

It is found in the secreted. This is Nodulation outer protein X (nopX) from Sinorhizobium fredii (strain NBRC 101917 / NGR234).